The following is a 289-amino-acid chain: 1D-myo-inositol 2-acetamido-2-deoxy-alpha-D-glucopyranoside deacetylase 1 (289 aa).

Residues His4, Asp7, and His140 each coordinate Zn(2+).

This sequence belongs to the MshB deacetylase family. Requires Zn(2+) as cofactor.

The enzyme catalyses 1D-myo-inositol 2-acetamido-2-deoxy-alpha-D-glucopyranoside + H2O = 1D-myo-inositol 2-amino-2-deoxy-alpha-D-glucopyranoside + acetate. Catalyzes the deacetylation of 1D-myo-inositol 2-acetamido-2-deoxy-alpha-D-glucopyranoside (GlcNAc-Ins) in the mycothiol biosynthesis pathway. The polypeptide is 1D-myo-inositol 2-acetamido-2-deoxy-alpha-D-glucopyranoside deacetylase 1 (Frankia alni (strain DSM 45986 / CECT 9034 / ACN14a)).